A 324-amino-acid polypeptide reads, in one-letter code: MKLLFMYLLPLLYIAPILLAVAFLTLIERKILGYMQHRKGPNVVGPFGLLQPIADGVKLFIKEPIRPSTSSQLLFILAPTLALALAMIMWTPFPLPIPYSNLNLSILFILAISSLTVYTILGSGWASNSKYALIGALRAVAQTISYEVTLALIILCSVLLAGGFTLSAFAISQEFTWFILPLWPMFLMWFVSTLAETNRAPFDLTEGESELVSGFNVEYAGGPFALFFLAEYANILMMNTLSTIIFLGSCMSSLTLTTSLLMTKASILSLCFLWVRASYPRFRYDQLMHLVWKNFLPLTLALVILYVSMPISLLFTPPLPWKRA.

A run of 8 helical transmembrane segments spans residues Leu3–Phe23, Leu73–Phe93, Ile106–Ala126, Ala151–Ile171, Phe175–Ala195, Leu226–Phe246, Thr255–Val275, and Phe295–Phe315.

Belongs to the complex I subunit 1 family.

It localises to the mitochondrion inner membrane. The enzyme catalyses a ubiquinone + NADH + 5 H(+)(in) = a ubiquinol + NAD(+) + 4 H(+)(out). Its function is as follows. Core subunit of the mitochondrial membrane respiratory chain NADH dehydrogenase (Complex I) that is believed to belong to the minimal assembly required for catalysis. Complex I functions in the transfer of electrons from NADH to the respiratory chain. The immediate electron acceptor for the enzyme is believed to be ubiquinone. In Aquarana catesbeiana (American bullfrog), this protein is NADH-ubiquinone oxidoreductase chain 1 (MT-ND1).